Consider the following 116-residue polypeptide: Putative serine proteinase inhibitor 2 homolog first part (116 aa).

It belongs to the serpin family. Poxviruses subfamily.

In Vaccinia virus (strain Copenhagen) (VACV), this protein is Putative serine proteinase inhibitor 2 homolog first part.